The sequence spans 390 residues: UPF0496 protein At1g20180 (390 aa).

The next 2 membrane-spanning stretches (helical) occupy residues 228-248 (LGGY…LIIA) and 250-270 (HSIL…FCLL).

It belongs to the UPF0496 family.

It is found in the membrane. The sequence is that of UPF0496 protein At1g20180 from Arabidopsis thaliana (Mouse-ear cress).